We begin with the raw amino-acid sequence, 343 residues long: Biotin synthase (343 aa).

One can recognise a Radical SAM core domain in the interval 36–254 (RQVQVSTLLS…IAVARIMMPR (219 aa)). [4Fe-4S] cluster-binding residues include cysteine 51, cysteine 55, and cysteine 58. Cysteine 95, cysteine 126, cysteine 186, and arginine 258 together coordinate [2Fe-2S] cluster.

Belongs to the radical SAM superfamily. Biotin synthase family. In terms of assembly, homodimer. It depends on [4Fe-4S] cluster as a cofactor. Requires [2Fe-2S] cluster as cofactor.

The catalysed reaction is (4R,5S)-dethiobiotin + (sulfur carrier)-SH + 2 reduced [2Fe-2S]-[ferredoxin] + 2 S-adenosyl-L-methionine = (sulfur carrier)-H + biotin + 2 5'-deoxyadenosine + 2 L-methionine + 2 oxidized [2Fe-2S]-[ferredoxin]. Its pathway is cofactor biosynthesis; biotin biosynthesis; biotin from 7,8-diaminononanoate: step 2/2. Functionally, catalyzes the conversion of dethiobiotin (DTB) to biotin by the insertion of a sulfur atom into dethiobiotin via a radical-based mechanism. The chain is Biotin synthase from Erwinia tasmaniensis (strain DSM 17950 / CFBP 7177 / CIP 109463 / NCPPB 4357 / Et1/99).